Here is a 776-residue protein sequence, read N- to C-terminus: DNA topoisomerase 1 (776 aa).

A Toprim domain is found at 1 to 111 (MKLVIVESPA…VESDDFFKRV (111 aa)). Residues E7 and D80 each contribute to the Mg(2+) site. Residues 132-568 (DTNLVNAQQA…FWRGFNHNIE (437 aa)) enclose the Topo IA-type catalytic domain. The tract at residues 166-171 (SAGRVQ) is interaction with DNA. The active-site O-(5'-phospho-DNA)-tyrosine intermediate is the Y304. A C4-type zinc finger spans residues 600-627 (CPSCKTGQLSLKLGKFGAFLACSNYPEC).

The protein belongs to the type IA topoisomerase family. In terms of assembly, monomer. Requires Mg(2+) as cofactor.

It carries out the reaction ATP-independent breakage of single-stranded DNA, followed by passage and rejoining.. In terms of biological role, releases the supercoiling and torsional tension of DNA, which is introduced during the DNA replication and transcription, by transiently cleaving and rejoining one strand of the DNA duplex. Introduces a single-strand break via transesterification at a target site in duplex DNA. The scissile phosphodiester is attacked by the catalytic tyrosine of the enzyme, resulting in the formation of a DNA-(5'-phosphotyrosyl)-enzyme intermediate and the expulsion of a 3'-OH DNA strand. The free DNA strand then undergoes passage around the unbroken strand, thus removing DNA supercoils. Finally, in the religation step, the DNA 3'-OH attacks the covalent intermediate to expel the active-site tyrosine and restore the DNA phosphodiester backbone. This Rickettsia prowazekii (strain Madrid E) protein is DNA topoisomerase 1.